Here is a 299-residue protein sequence, read N- to C-terminus: MEKLRSGFISIIGRPNVGKSTLMNQLIGKKVAIMSDKPQTTRNRIVGVLNAPKGQAIFLDTPGIHKPKHKLGEIMVTTARKTLGEVDLILYVVDASEEPGGGEQFISQMLKDIKTPVFLVVNKMDTVSREEGLKKISQYSQMVAWQELIPVSAKEKTNLDRLKDLIFAKLPEGPLYYPAGSFTDQPERQLMAEMIREKVLHATREEIPHSVAVIIEHLQETPKGGMVVHATIFTERDSQKGILIGKGGSLLKEVGQKARQEIEALLGTSIYLELWVKVKKDWRQRPDVLRSFGFDEKME.

The Era-type G domain occupies 5-172 (RSGFISIIGR…KDLIFAKLPE (168 aa)). Residues 13–20 (GRPNVGKS) are G1. 13–20 (GRPNVGKS) serves as a coordination point for GTP. Residues 39–43 (QTTRN) are G2. A G3 region spans residues 60–63 (DTPG). Residues 60–64 (DTPGI) and 122–125 (NKMD) contribute to the GTP site. The G4 stretch occupies residues 122–125 (NKMD). Residues 151–153 (VSA) form a G5 region. Positions 203–280 (TREEIPHSVA…YLELWVKVKK (78 aa)) constitute a KH type-2 domain.

The protein belongs to the TRAFAC class TrmE-Era-EngA-EngB-Septin-like GTPase superfamily. Era GTPase family. In terms of assembly, monomer.

It is found in the cytoplasm. Its subcellular location is the cell membrane. In terms of biological role, an essential GTPase that binds both GDP and GTP, with rapid nucleotide exchange. Plays a role in 16S rRNA processing and 30S ribosomal subunit biogenesis and possibly also in cell cycle regulation and energy metabolism. This Heliobacterium modesticaldum (strain ATCC 51547 / Ice1) protein is GTPase Era.